The following is a 385-amino-acid chain: Hsp70/Hsp90 co-chaperone CNS1 (385 aa).

The interval 1 to 37 is disordered; sequence MSSVNANGGYTKPQKYVPGPGDPELPPQLSEFKDKTS. TPR repeat units follow at residues 83-116, 121-154, and 155-189; these read AENF…ECED, ESLY…NPKN, and VKCY…DPEN.

The protein belongs to the TTC4 family. Monomer. Component of Hsp70 and Hsp90 chaperone complexes. Interacts (via TPR repeats) with HSC82 and HSP82 (via C-terminal MEEVD pentapeptide). Interacts with CPR7, SSA1 and SPI1.

The protein resides in the cytoplasm. Co-chaperone that binds to the molecular chaperones Hsp90 (HSC82 and HSP82) and Hsp70 (SSA1). Stimulates SSA1 ATPase activity, but not Hsp90 ATPase activity. Involved in only a subset of Hsp90 functions. The polypeptide is Hsp70/Hsp90 co-chaperone CNS1 (CNS1) (Saccharomyces cerevisiae (strain ATCC 204508 / S288c) (Baker's yeast)).